Here is a 125-residue protein sequence, read N- to C-terminus: Large ribosomal subunit protein eL31 (125 aa).

The residue at position 1 (Met1) is an N-acetylmethionine. Phosphoserine is present on Ser15. N6-succinyllysine is present on residues Lys55 and Lys70. Lys75 bears the N6-acetyllysine; alternate mark. Lys75 carries the post-translational modification N6-succinyllysine; alternate. The residue at position 98 (Ser98) is a Phosphoserine.

It belongs to the eukaryotic ribosomal protein eL31 family. In terms of assembly, component of the large ribosomal subunit.

The protein localises to the cytoplasm. Functionally, component of the large ribosomal subunit. The ribosome is a large ribonucleoprotein complex responsible for the synthesis of proteins in the cell. The chain is Large ribosomal subunit protein eL31 (RPL31) from Pongo abelii (Sumatran orangutan).